Here is a 317-residue protein sequence, read N- to C-terminus: Tyrosine--tRNA ligase (317 aa).

Tyr-32 provides a ligand contact to L-tyrosine. Residues 37–45 carry the 'HIGH' region motif; that stretch reads PSGEIHLGH. The L-tyrosine site is built by Tyr-152, Gln-156, Asp-159, and Gln-174. The 'KMSKS' region motif lies at 208-212; that stretch reads KMSSS. Ser-211 is an ATP binding site.

The protein belongs to the class-I aminoacyl-tRNA synthetase family. TyrS type 3 subfamily. Homodimer.

Its subcellular location is the cytoplasm. It catalyses the reaction tRNA(Tyr) + L-tyrosine + ATP = L-tyrosyl-tRNA(Tyr) + AMP + diphosphate + H(+). Its function is as follows. Catalyzes the attachment of tyrosine to tRNA(Tyr) in a two-step reaction: tyrosine is first activated by ATP to form Tyr-AMP and then transferred to the acceptor end of tRNA(Tyr). In Methanocorpusculum labreanum (strain ATCC 43576 / DSM 4855 / Z), this protein is Tyrosine--tRNA ligase.